A 535-amino-acid chain; its full sequence is Bifunctional purine biosynthesis protein PurH (535 aa).

The region spanning Thr6–Val151 is the MGS-like domain.

The protein belongs to the PurH family.

It carries out the reaction (6R)-10-formyltetrahydrofolate + 5-amino-1-(5-phospho-beta-D-ribosyl)imidazole-4-carboxamide = 5-formamido-1-(5-phospho-D-ribosyl)imidazole-4-carboxamide + (6S)-5,6,7,8-tetrahydrofolate. It catalyses the reaction IMP + H2O = 5-formamido-1-(5-phospho-D-ribosyl)imidazole-4-carboxamide. It functions in the pathway purine metabolism; IMP biosynthesis via de novo pathway; 5-formamido-1-(5-phospho-D-ribosyl)imidazole-4-carboxamide from 5-amino-1-(5-phospho-D-ribosyl)imidazole-4-carboxamide (10-formyl THF route): step 1/1. Its pathway is purine metabolism; IMP biosynthesis via de novo pathway; IMP from 5-formamido-1-(5-phospho-D-ribosyl)imidazole-4-carboxamide: step 1/1. The polypeptide is Bifunctional purine biosynthesis protein PurH (Pseudomonas fluorescens (strain ATCC BAA-477 / NRRL B-23932 / Pf-5)).